Here is a 311-residue protein sequence, read N- to C-terminus: Deacetoxycephalosporin C synthase (311 aa).

Positions 154–267 constitute a Fe2OG dioxygenase domain; sequence DCEPLLRFRY…RTSSVFFLRP (114 aa).

Belongs to the iron/ascorbate-dependent oxidoreductase family. Fe cation serves as cofactor. The cofactor is L-ascorbate.

The enzyme catalyses penicillin N + 2-oxoglutarate + O2 = deacetoxycephalosporin C + succinate + CO2 + H2O. Its pathway is antibiotic biosynthesis; cephalosporin C biosynthesis. Catalyzes the step from penicillin N to deacetoxy-cephalosporin C. The protein is Deacetoxycephalosporin C synthase (cefE) of Streptomyces clavuligerus.